We begin with the raw amino-acid sequence, 367 residues long: UDP-N-acetylglucosamine--N-acetylmuramyl-(pentapeptide) pyrophosphoryl-undecaprenol N-acetylglucosamine transferase (367 aa).

UDP-N-acetyl-alpha-D-glucosamine contacts are provided by residues 11 to 13 (TAG), N125, R163, S197, and Q289.

The protein belongs to the glycosyltransferase 28 family. MurG subfamily.

The protein resides in the cell membrane. The enzyme catalyses di-trans,octa-cis-undecaprenyl diphospho-N-acetyl-alpha-D-muramoyl-L-alanyl-D-glutamyl-meso-2,6-diaminopimeloyl-D-alanyl-D-alanine + UDP-N-acetyl-alpha-D-glucosamine = di-trans,octa-cis-undecaprenyl diphospho-[N-acetyl-alpha-D-glucosaminyl-(1-&gt;4)]-N-acetyl-alpha-D-muramoyl-L-alanyl-D-glutamyl-meso-2,6-diaminopimeloyl-D-alanyl-D-alanine + UDP + H(+). It participates in cell wall biogenesis; peptidoglycan biosynthesis. In terms of biological role, cell wall formation. Catalyzes the transfer of a GlcNAc subunit on undecaprenyl-pyrophosphoryl-MurNAc-pentapeptide (lipid intermediate I) to form undecaprenyl-pyrophosphoryl-MurNAc-(pentapeptide)GlcNAc (lipid intermediate II). The chain is UDP-N-acetylglucosamine--N-acetylmuramyl-(pentapeptide) pyrophosphoryl-undecaprenol N-acetylglucosamine transferase from Clavibacter michiganensis subsp. michiganensis (strain NCPPB 382).